We begin with the raw amino-acid sequence, 391 residues long: Ferrochelatase (391 aa).

Fe cation contacts are provided by H196 and E281.

The protein belongs to the ferrochelatase family.

It localises to the cytoplasm. The enzyme catalyses heme b + 2 H(+) = protoporphyrin IX + Fe(2+). It functions in the pathway porphyrin-containing compound metabolism; protoheme biosynthesis; protoheme from protoporphyrin-IX: step 1/1. Functionally, catalyzes the ferrous insertion into protoporphyrin IX. This is Ferrochelatase from Prochlorococcus marinus (strain MIT 9312).